The primary structure comprises 225 residues: Transmembrane protein 40 (225 aa).

Met-1 is modified (N-acetylmethionine). Over residues 1–14 the composition is skewed to low complexity; sequence MEASGSSSQSQDSG. The segment at 1-96 is disordered; that stretch reads MEASGSSSQS…RRDSLRGADH (96 aa). Residues 15–29 are compositionally biased toward basic and acidic residues; sequence GVHRETEDHYQETEL. Basic residues predominate over residues 30 to 39; the sequence is HKHHGKARER. Residues 46–68 show a composition bias toward low complexity; that stretch reads SSSSSSSSSSSSSSSSSSSSSSD. Positions 78-87 are enriched in basic residues; the sequence is GPRKHRRRPR. Residue Ser-129 is modified to Phosphoserine. 2 helical membrane-spanning segments follow: residues 152-172 and 179-199; these read FFHF…YHYY and LGVG…FGLV.

It localises to the membrane. The chain is Transmembrane protein 40 (Tmem40) from Mus musculus (Mouse).